We begin with the raw amino-acid sequence, 272 residues long: Shikimate dehydrogenase (NADP(+)) (272 aa).

Residues Ser14 to Ser16 and Thr61 contribute to the shikimate site. Lys65 serves as the catalytic Proton acceptor. Glu77 provides a ligand contact to NADP(+). Shikimate is bound by residues Asn86 and Asp102. NADP(+) is bound by residues Gly126–Ala130, Asn149–Arg154, and Met213. Tyr215 serves as a coordination point for shikimate. Gly237 is an NADP(+) binding site.

The protein belongs to the shikimate dehydrogenase family. Homodimer.

It carries out the reaction shikimate + NADP(+) = 3-dehydroshikimate + NADPH + H(+). It functions in the pathway metabolic intermediate biosynthesis; chorismate biosynthesis; chorismate from D-erythrose 4-phosphate and phosphoenolpyruvate: step 4/7. In terms of biological role, involved in the biosynthesis of the chorismate, which leads to the biosynthesis of aromatic amino acids. Catalyzes the reversible NADPH linked reduction of 3-dehydroshikimate (DHSA) to yield shikimate (SA). The protein is Shikimate dehydrogenase (NADP(+)) of Salmonella choleraesuis (strain SC-B67).